A 143-amino-acid polypeptide reads, in one-letter code: Transcriptional regulator MraZ (143 aa).

SpoVT-AbrB domains lie at 5-47 (EFRH…PMNE) and 76-119 (ASEC…SQEK).

The protein belongs to the MraZ family. As to quaternary structure, forms oligomers.

Its subcellular location is the cytoplasm. It localises to the nucleoid. The chain is Transcriptional regulator MraZ from Natranaerobius thermophilus (strain ATCC BAA-1301 / DSM 18059 / JW/NM-WN-LF).